The primary structure comprises 348 residues: Rhodopsin (348 aa).

An N-acetylmethionine modification is found at M1. Residues 1–36 (MNGTEGPNFYVPFSNKTGVVRSPFEAPQYYLAEPWQ) are Extracellular-facing. N2 and N15 each carry an N-linked (GlcNAc...) asparagine glycan. The helical transmembrane segment at 37 to 61 (FSMLAAYMFLLIMLGFPINFLTLYV) threads the bilayer. Topologically, residues 62-73 (TVQHKKLRTPLN) are cytoplasmic. A helical transmembrane segment spans residues 74–96 (YILLNLAVADLFMVFGGFTTTLY). Topologically, residues 97–110 (TSLHGYFVFGPTGC) are extracellular. Residues C110 and C187 are joined by a disulfide bond. Residues 111–133 (NLEGFFATLGGEIALWSLVVLAI) traverse the membrane as a helical segment. The 'Ionic lock' involved in activated form stabilization motif lies at 134 to 136 (ERY). The Cytoplasmic segment spans residues 134–152 (ERYVVVCKPMSNFRFGENH). The helical transmembrane segment at 153-173 (AIMGVAFTWVMALACAAPPLV) threads the bilayer. Residues 174 to 202 (GWSRYIPEGMQCSCGIDYYTPHEETNNES) are Extracellular-facing. E201 is a Zn(2+) binding site. A helical membrane pass occupies residues 203–224 (FVIYMFVVHFIIPLIVIFFCYG). Over 225-252 (QLVFTVKEAAAQQQESATTQKAEKEVTR) the chain is Cytoplasmic. A helical membrane pass occupies residues 253 to 274 (MVIIMVIAFLICWLPYAGVAFY). Topologically, residues 275-286 (IFTHQGSDFGPI) are extracellular. Q279 is a Zn(2+) binding site. Residues 287 to 308 (FMTIPAFFAKTSAVYNPVIYIM) form a helical membrane-spanning segment. N6-(retinylidene)lysine is present on K296. Topologically, residues 309–348 (MNKQFRNCMVTTLCCGKNPLGDDEASTTVSKTETSQVAPA) are cytoplasmic. Residues C322 and C323 are each lipidated (S-palmitoyl cysteine). Positions 330–348 (DDEASTTVSKTETSQVAPA) are interaction with SAG. Phosphoserine is present on S334. T335 and T336 each carry phosphothreonine. Residue S338 is modified to Phosphoserine. T340 and T342 each carry phosphothreonine. A Phosphoserine; by RK and GRK7 modification is found at S343.

This sequence belongs to the G-protein coupled receptor 1 family. Opsin subfamily. In terms of assembly, homodimer. May form a complex composed of RHO, GRK1 and RCVRN in a Ca(2+)-dependent manner; RCVRN prevents the interaction between GRK1 and RHO. Interacts with GRK1. Interacts (phosphorylated form) with SAG. Interacts with GNAT1. Interacts with GNAT3. SAG and G-proteins compete for a common binding site. Interacts with PRCD; the interaction promotes PRCD stability. Forms a complex with ASAP1 and ARF4. Forms a complex with ASAP1, RAB11A, Rabin8/RAB3IP, ARF4 and RAB11FIP3; the complex regulates Golgi-to-cilia rhodopsin/RHO transport in photoreceptors. Phosphorylated on some or all of the serine and threonine residues present in the C-terminal region. In terms of processing, contains one covalently linked retinal chromophore. Upon light absorption, the covalently bound 11-cis-retinal is converted to all-trans-retinal. After hydrolysis of the Schiff base and release of the covalently bound all-trans-retinal, active rhodopsin is regenerated by binding of a fresh molecule of 11-cis-retinal. Expressed in rod-shaped photoreceptor cells in the retina that mediate vision in dim light (at protein level).

The protein localises to the membrane. Its subcellular location is the cell projection. The protein resides in the cilium. It localises to the photoreceptor outer segment. Photoreceptor required for image-forming vision at low light intensity. Required for photoreceptor cell viability after birth. Light-induced isomerization of 11-cis to all-trans retinal triggers a conformational change that activates signaling via G-proteins. Subsequent receptor phosphorylation mediates displacement of the bound G-protein alpha subunit by the arrestin SAG and terminates signaling. The chain is Rhodopsin (RHO) from Bos taurus (Bovine).